Reading from the N-terminus, the 517-residue chain is Protein disulfide isomerase-like 1-2 (517 aa).

The N-terminal stretch at 1 to 23 is a signal peptide; sequence MAVNLVLSFALAILISSSPTAVG. Positions 24-143 constitute a Thioredoxin 1 domain; it reads VDATEELKEA…IVEYLKRQVG (120 aa). An N-linked (GlcNAc...) asparagine glycan is attached at Asn41. Catalysis depends on nucleophile residues Cys61 and Cys64. Cys61 and Cys64 form a disulfide bridge. N-linked (GlcNAc...) asparagine glycosylation is present at Asn301. A Thioredoxin 2 domain is found at 357–484; it reads VEYGNLTPYV…IISFINENRG (128 aa). Active-site nucleophile residues include Cys407 and Cys410. A disulfide bridge connects residues Cys407 and Cys410. Residues 514–517 carry the Prevents secretion from ER motif; that stretch reads KDEL.

It belongs to the protein disulfide isomerase family.

The protein resides in the endoplasmic reticulum lumen. The enzyme catalyses Catalyzes the rearrangement of -S-S- bonds in proteins.. In terms of biological role, acts as a protein-folding catalyst that interacts with nascent polypeptides to catalyze the formation, isomerization, and reduction or oxidation of disulfide bonds. May play a role in storage protein biogenesis. This Oryza sativa subsp. japonica (Rice) protein is Protein disulfide isomerase-like 1-2 (PDIL1-2).